The sequence spans 2475 residues: Non-reducing polyketide synthase ausA (2475 aa).

An N-terminal acylcarrier protein transacylase domain (SAT) region spans residues Val14 to Gln253. A Ketosynthase family 3 (KS3) domain is found at Ser384–Glu800. Residues Cys549, His684, and His723 each act as for beta-ketoacyl synthase activity in the active site. A malonyl-CoA:ACP transacylase (MAT) domain region spans residues Leu910 to Ala1212. Ser997 (for acyl/malonyl transferase activity) is an active-site residue. The interval Glu1279 to Asp1407 is N-terminal hotdog fold. In terms of domain architecture, PKS/mFAS DH spans Glu1279–Arg1586. A product template (PT) domain region spans residues Lys1282–Leu1585. Catalysis depends on His1312, which acts as the Proton acceptor; for dehydratase activity. The segment at Ser1435–Arg1586 is C-terminal hotdog fold. Asp1493 functions as the Proton donor; for dehydratase activity in the catalytic mechanism. Positions Ser1626–Arg1703 constitute a Carrier domain. Residue Ser1663 is modified to O-(pantetheine 4'-phosphoryl)serine. The segment at Gln1865–Asn2098 is methyltransferase (CMeT) domain. The segment at Ser2127–Leu2475 is thioesterase (TE) domain. Catalysis depends on for thioesterase activity residues Ser2250, Asp2412, and His2444.

It carries out the reaction 3 malonyl-CoA + acetyl-CoA + 2 S-adenosyl-L-methionine = 3,5-dimethylorsellinate + 2 S-adenosyl-L-homocysteine + 3 CO2 + 4 CoA. It functions in the pathway secondary metabolite biosynthesis; terpenoid biosynthesis. Its function is as follows. Non-reducing polyketide synthase; part of the gene cluster A that mediates the biosynthesis of the fungal meroterpenoid acetoxydehydroaustin. The first step of the pathway is the synthesis of 3,5-dimethylorsellinic acid by the polyketide synthase ausA. 3,5-dimethylorsellinic acid is then prenylated by the polyprenyl transferase ausN. Further epoxidation by the FAD-dependent monooxygenase ausM and cyclization by the probable terpene cyclase ausL lead to the formation of protoaustinoid A. Protoaustinoid A is then oxidized to spiro-lactone preaustinoid A3 by the combined action of the FAD-binding monooxygenases ausB and ausC, and the dioxygenase ausE. Acid-catalyzed keto-rearrangement and ring contraction of the tetraketide portion of preaustinoid A3 by ausJ lead to the formation of preaustinoid A4. The aldo-keto reductase ausK, with the help of ausH, is involved in the next step by transforming preaustinoid A4 into isoaustinone which is in turn hydroxylated by the P450 monooxygenase ausI to form austinolide. The cytochrome P450 monooxygenase ausG then modifies austinolide to austinol. Austinol is further acetylated to austin by the O-acetyltransferase ausP, which spontaneously changes to dehydroaustin. The cytochrome P450 monooxygenase then converts dehydroaustin is into 7-dehydrodehydroaustin. The hydroxylation catalyzed by ausR permits the second O-acetyltransferase ausQ to add an additional acetyl group to the molecule, leading to the formation of acetoxydehydroaustin. Due to genetic rearrangements of the clusters and the subsequent loss of some enzymes, the end product of the Penicillium brasilianum austinoid biosynthesis clusters is acetoxydehydroaustin. The polypeptide is Non-reducing polyketide synthase ausA (Penicillium brasilianum).